The following is a 289-amino-acid chain: 4-hydroxy-3-methylbut-2-enyl diphosphate reductase (289 aa).

Cysteine 13 contacts [4Fe-4S] cluster. 2 residues coordinate (2E)-4-hydroxy-3-methylbut-2-enyl diphosphate: histidine 42 and histidine 76. Dimethylallyl diphosphate-binding residues include histidine 42 and histidine 76. 2 residues coordinate isopentenyl diphosphate: histidine 42 and histidine 76. [4Fe-4S] cluster is bound at residue cysteine 98. Histidine 130 serves as a coordination point for (2E)-4-hydroxy-3-methylbut-2-enyl diphosphate. Histidine 130 provides a ligand contact to dimethylallyl diphosphate. Residue histidine 130 participates in isopentenyl diphosphate binding. The active-site Proton donor is the glutamate 132. (2E)-4-hydroxy-3-methylbut-2-enyl diphosphate is bound at residue threonine 168. A [4Fe-4S] cluster-binding site is contributed by cysteine 199. Residues serine 227, serine 228, asparagine 229, and serine 272 each contribute to the (2E)-4-hydroxy-3-methylbut-2-enyl diphosphate site. Dimethylallyl diphosphate contacts are provided by serine 227, serine 228, asparagine 229, and serine 272. The isopentenyl diphosphate site is built by serine 227, serine 228, asparagine 229, and serine 272.

This sequence belongs to the IspH family. The cofactor is [4Fe-4S] cluster.

It catalyses the reaction isopentenyl diphosphate + 2 oxidized [2Fe-2S]-[ferredoxin] + H2O = (2E)-4-hydroxy-3-methylbut-2-enyl diphosphate + 2 reduced [2Fe-2S]-[ferredoxin] + 2 H(+). It carries out the reaction dimethylallyl diphosphate + 2 oxidized [2Fe-2S]-[ferredoxin] + H2O = (2E)-4-hydroxy-3-methylbut-2-enyl diphosphate + 2 reduced [2Fe-2S]-[ferredoxin] + 2 H(+). It participates in isoprenoid biosynthesis; dimethylallyl diphosphate biosynthesis; dimethylallyl diphosphate from (2E)-4-hydroxy-3-methylbutenyl diphosphate: step 1/1. Its pathway is isoprenoid biosynthesis; isopentenyl diphosphate biosynthesis via DXP pathway; isopentenyl diphosphate from 1-deoxy-D-xylulose 5-phosphate: step 6/6. Functionally, catalyzes the conversion of 1-hydroxy-2-methyl-2-(E)-butenyl 4-diphosphate (HMBPP) into a mixture of isopentenyl diphosphate (IPP) and dimethylallyl diphosphate (DMAPP). Acts in the terminal step of the DOXP/MEP pathway for isoprenoid precursor biosynthesis. This chain is 4-hydroxy-3-methylbut-2-enyl diphosphate reductase, found in Porphyromonas gingivalis (strain ATCC BAA-308 / W83).